The primary structure comprises 260 residues: Triosephosphate isomerase (260 aa).

Residue 11–13 participates in substrate binding; it reads NWK. Residue histidine 103 is the Electrophile of the active site. Glutamate 175 serves as the catalytic Proton acceptor. Residues glycine 181, serine 220, and 241–242 contribute to the substrate site; that span reads GG.

The protein belongs to the triosephosphate isomerase family. As to quaternary structure, homodimer.

Its subcellular location is the cytoplasm. The enzyme catalyses D-glyceraldehyde 3-phosphate = dihydroxyacetone phosphate. It functions in the pathway carbohydrate biosynthesis; gluconeogenesis. Its pathway is carbohydrate degradation; glycolysis; D-glyceraldehyde 3-phosphate from glycerone phosphate: step 1/1. In terms of biological role, involved in the gluconeogenesis. Catalyzes stereospecifically the conversion of dihydroxyacetone phosphate (DHAP) to D-glyceraldehyde-3-phosphate (G3P). This chain is Triosephosphate isomerase, found in Shewanella piezotolerans (strain WP3 / JCM 13877).